The chain runs to 245 residues: 1-(5-phosphoribosyl)-5-[(5-phosphoribosylamino)methylideneamino] imidazole-4-carboxamide isomerase (245 aa).

The active-site Proton acceptor is Asp-8. The active-site Proton donor is the Asp-131.

Belongs to the HisA/HisF family.

Its subcellular location is the cytoplasm. The enzyme catalyses 1-(5-phospho-beta-D-ribosyl)-5-[(5-phospho-beta-D-ribosylamino)methylideneamino]imidazole-4-carboxamide = 5-[(5-phospho-1-deoxy-D-ribulos-1-ylimino)methylamino]-1-(5-phospho-beta-D-ribosyl)imidazole-4-carboxamide. Its pathway is amino-acid biosynthesis; L-histidine biosynthesis; L-histidine from 5-phospho-alpha-D-ribose 1-diphosphate: step 4/9. This Neisseria meningitidis serogroup C (strain 053442) protein is 1-(5-phosphoribosyl)-5-[(5-phosphoribosylamino)methylideneamino] imidazole-4-carboxamide isomerase.